The chain runs to 168 residues: Ribosome maturation factor RimM (168 aa).

One can recognise a PRC barrel domain in the interval 96 to 168; it reads KDEYYWGDLV…RIRVAWQKDW (73 aa).

Belongs to the RimM family. Binds ribosomal protein uS19.

The protein localises to the cytoplasm. Functionally, an accessory protein needed during the final step in the assembly of 30S ribosomal subunit, possibly for assembly of the head region. Essential for efficient processing of 16S rRNA. May be needed both before and after RbfA during the maturation of 16S rRNA. It has affinity for free ribosomal 30S subunits but not for 70S ribosomes. This is Ribosome maturation factor RimM from Azoarcus sp. (strain BH72).